Here is a 904-residue protein sequence, read N- to C-terminus: Auxilin-related protein 1 (904 aa).

Disordered regions lie at residues 46 to 99 (AAGK…FDYD), 150 to 731 (SSIS…NLRK), and 749 to 776 (SASQ…RHQR). Positions 59–69 (DPGRDGDDLLF) are enriched in basic and acidic residues. Positions 81-95 (YGSSSGDSRSPSAPA) are enriched in low complexity. The segment covering 178 to 188 (KGADSDREEKG) has biased composition (basic and acidic residues). The span at 201–215 (RTSSPPSKRTTSETT) shows a compositional bias: low complexity. Residues 232 to 244 (VEEDPFVVLEESE) are compositionally biased toward acidic residues. Basic and acidic residues predominate over residues 245 to 271 (STPREPSRTDPLDDIGKFNSRKTDHSS). Residues 370–383 (SAPPPTRPPPPRPT) are compositionally biased toward pro residues. The segment covering 394 to 419 (SIPTSAYHSHVPSSGRASVNSPTASQ) has biased composition (polar residues). The stretch at 456 to 663 (SAAAMKDAMD…AAAEARGRAA (208 aa)) forms a coiled coil. 2 stretches are compositionally biased toward basic and acidic residues: residues 462-570 (DAMD…EAHA) and 581-660 (TDAR…EARG). The region spanning 619 to 640 (REKAEKAAAEAKERANAEAREK) is the R domain. The segment covering 661–673 (RAAAQAKAKQQQE) has biased composition (low complexity). Residues 674 to 697 (NTNDLDSFFSSISRPNSAPRQRTN) show a composition bias toward polar residues. Residues 762-804 (ETEERRRARLERHQRTQERAAKALAEKNERDLQVQREQVEKDR) adopt a coiled-coil conformation. Positions 764-776 (EERRRARLERHQR) are enriched in basic and acidic residues. In terms of domain architecture, J spans 839–904 (CGWQPVSLTD…WNKFNSEELF (66 aa)).

In terms of assembly, interacts with SH3P1.

The protein localises to the cell membrane. It is found in the golgi apparatus. Its subcellular location is the trans-Golgi network. The protein resides in the endoplasmic reticulum. It localises to the cytoplasmic vesicle. Functionally, promotes uncoating of clathrin-coated vesicles. May interact directly with clathrin. This chain is Auxilin-related protein 1, found in Arabidopsis thaliana (Mouse-ear cress).